Reading from the N-terminus, the 83-residue chain is Large ribosomal subunit protein eL43 (83 aa).

Residues cysteine 38, cysteine 41, cysteine 56, and cysteine 59 each contribute to the Zn(2+) site. Residues 38 to 59 form a C4-type zinc finger; it reads CPVCGRRAVRRISTGIWQCKKC.

It belongs to the eukaryotic ribosomal protein eL43 family. Putative zinc-binding subfamily. In terms of assembly, part of the 50S ribosomal subunit. The cofactor is Zn(2+).

Functionally, binds to the 23S rRNA. The sequence is that of Large ribosomal subunit protein eL43 from Pyrococcus abyssi (strain GE5 / Orsay).